We begin with the raw amino-acid sequence, 834 residues long: MWARNLMARALYDNVPECAEELAFRKGDILTVIEQNTGGLEGWWLCSLHGRQGIVPGNRVKLLIGPIQETPSGQDQPTSGLMHQTFGQQKLYQVPNPHSAPRDTIYQVPPSYQHQGIYQVPTSHGIQEQDVYQVPPSVQRSIGAANGPHLSKKVVTPVRTGQGYVYEYPSRHQKDIYDIPPSHTTQGVYDIPPSSVKVPVFSLPVGEIKPQGVYDIPPTKGLYAIPPSACRDEAGLREKEYDFPPPMRQAGRLDVRPEGVYDIPPTSTKPTGKDLHIKYNCDAPGAAELATRRHQSVLLNHAPSQLGQSPGAQNDAYDVPRGVQFLEPPAETSEKANPEERDGVYDVPLHNPPDAKGSQDVVDGMNRLSFSSTGSTRSNMSTSSTTSKESSVSASPSQDKRLLLDPDTAIERLHRLQQTLEVGVSSLMALVTTDWRCYGYMDRHINEIRTSVDKVELFVRDYLHFARGAVANASCLPELTLHNKMKRELQRVEDSHQILSQTSHDLNECSWSLNILAVNKPQNKCDDLDRFVMVAKTVPDDAKQLTTTINTNAEALFRPGPGSSHVKSGSENIMNSTEYPHAASQMPLLHPGDHKAQGLNKPLPPSLGKDQPPDCSSSDGSERSWMDDYDYVHLQGKEEFERQQKELLEKENIIKQNKLQLEHHQLSQFQLLEQEITKPVENDISKWKPSQSLPTTNSSVGAQDRQLLCFYYDQCETHYISLLNAIDALFSCVSSAQPPRIFVAHSKFVILSAHKLVFIGDTLTRQVAAQDICHKVMNSSNQLCEQLKTIVMATKMAALHYPSTTALQEMVHQVTDLSRNAQLFKRSLLEMATF.

The SH3 domain occupies 3 to 65; it reads ARNLMARALY…PGNRVKLLIG (63 aa). 7 positions are modified to phosphotyrosine: tyrosine 92, tyrosine 164, tyrosine 166, tyrosine 177, tyrosine 189, tyrosine 214, and tyrosine 223. Serine 296 carries the post-translational modification Phosphoserine. Tyrosine 317 carries the post-translational modification Phosphotyrosine. 2 disordered regions span residues 328–402 and 584–624; these read PPAE…DKRL and SQMP…SERS. Residues 332–344 show a composition bias toward basic and acidic residues; sequence TSEKANPEERDGV. The short motif at 360-363 is the Caspase cleavage related site element; sequence DVVD. Over residues 368–397 the composition is skewed to low complexity; that stretch reads LSFSSTGSTRSNMSTSSTTSKESSVSASPS. A Phosphoserine modification is found at serine 369. The segment at 710 to 760 is divergent helix-loop-helix motif; sequence FYYDQCETHYISLLNAIDALFSCVSSAQPPRIFVAHSKFVILSAHKLVFIG. The tract at residues 710–834 is required for interaction with PLK1; that stretch reads FYYDQCETHY…KRSLLEMATF (125 aa). Serine 780 is modified (phosphoserine). The residue at position 804 (threonine 804) is a Phosphothreonine.

Belongs to the CAS family. In terms of assembly, homodimer. Forms heterodimers with BCAR1/p130cas. Forms complexes with PTK2B/RAFTK, adapter protein CRKL and LYN kinase. Part of a complex composed of NEDD9, AURKA and CTTN; within the complex NEDD9 acts as a scaffold protein and is required for complex formation. Part of a ternary complex composed of SMAD3, ITCH/AIP4 and NEDD9/HEF1; within the complex NEDD9/HEF1 interacts (via N-terminus) with ITCH/AIP4; the complex mediates ubiquitination and proteasomal degradation of NEDD9/HEF1. Interacts with ID2. Interacts with CTTN (via N-terminus). Interacts with MICAL. Interacts with TXNL4/DIM1. Interacts with BCAR3 (via Ras-GEF domain). Interacts with SH2D3C isoform 1 and isoform 2. Interacts with BCAR3. Interacts with ECT2. Interacts with PTPN11/SHP-2 (via SH2 domains); the interaction is enhanced when NEDD9/CAS-L is tyrosine phosphorylated. Interacts (via C-terminus) with PLK1 (via polo box domain). Interacts with NKX2-5. Interacts with SMAD3; the interaction is inhibited by oxidation of NEDD9. Interacts with ABL1; interaction is induced by CXCL12-mediated phosphorylation of NEDD/HEF1. Interacts (via SH3 domain) with PTK2/FAK. Interacts with FYN; in the presence of PTK2. Interacts with INPPL1/SHIP2. Post-translationally, polyubiquitinated by ITCH/AIP4, leading to proteasomal degradation. In terms of processing, PTK2/FAK1 phosphorylates the protein at the YDYVHL motif (conserved among all cas proteins) following integrin stimulation. The SRC family kinases (FYN, SRC, LCK and CRK) are recruited to the phosphorylated sites and can phosphorylate other tyrosine residues. Ligation of either integrin beta-1 or B-cell antigen receptor on tonsillar B-cells and B-cell lines promotes tyrosine phosphorylation and both integrin and BCR-mediated tyrosine phosphorylation requires an intact actin network. Phosphorylation is required to recruit NEDD9 to T-cell receptor microclusters at the periphery of newly formed immunological synapses. In fibroblasts transformation with oncogene v-ABL results in an increase in tyrosine phosphorylation. Transiently phosphorylated following CD3 cross-linking and this phosphorylated form binds to CRKL and C3G. A mutant lacking the SH3 domain is phosphorylated upon CD3 cross-linking but not upon integrin beta-1 cross-linking. Tyrosine phosphorylation occurs upon stimulation of the G-protein coupled C1a calcitonin receptor. Calcitonin-stimulated tyrosine phosphorylation is mediated by calcium- and protein kinase C-dependent mechanisms and requires the integrity of the actin cytoskeleton. Phosphorylation at Ser-369 induces proteasomal degradation. Phosphorylated by LYN. Phosphorylation at Ser-780 by CSNK1D or CSNK1E, or phosphorylation of Thr-804 by CSNK1E enhances the interaction of NEDD9 with PLK1.

Its subcellular location is the cytoplasm. It localises to the cell cortex. The protein resides in the nucleus. It is found in the golgi apparatus. The protein localises to the cell projection. Its subcellular location is the lamellipodium. It localises to the cell junction. The protein resides in the focal adhesion. It is found in the cytoskeleton. The protein localises to the spindle pole. Its subcellular location is the cilium. It localises to the cilium basal body. The protein resides in the basolateral cell membrane. Its function is as follows. Negatively regulates embryonic fibroblast migration. May play an important role in integrin beta-1 or B cell antigen receptor (BCR) mediated signaling in B- and T-cells. Integrin beta-1 stimulation leads to recruitment of various proteins including CRKl and SHPTP2 to the tyrosine phosphorylated form. Promotes adhesion and migration of lymphocytes; as a result required for the correct migration of lymphocytes to the spleen and other secondary lymphoid organs. Plays a role in the organization of T-cell F-actin cortical cytoskeleton and the centralization of T-cell receptor microclusters at the immunological synapse. Negatively regulates cilia outgrowth in polarized cysts. Modulates cilia disassembly via activation of AURKA-mediated phosphorylation of HDAC6 and subsequent deacetylation of alpha-tubulin. In conjunction with NKX2-5, positively regulates transcription of genes such as COL3A1 and MMP2, resulting in increased pulmonary endothelial fibrosis in response to hypoxia. Positively regulates RANKL-induced osteoclastogenesis. Required for the maintenance of hippocampal dendritic spines in the dentate gyrus and CA1 regions, thereby involved in spatial learning and memory. This Canis lupus familiaris (Dog) protein is Enhancer of filamentation 1.